The following is a 109-amino-acid chain: Glutaredoxin-8 (109 aa).

The 105-residue stretch at 5-109 (VTKAEEMIKS…EELTKIGLLP (105 aa)) folds into the Glutaredoxin domain. A disulfide bridge links Cys25 with Cys28.

This sequence belongs to the glutaredoxin family. As to quaternary structure, monomer.

It is found in the cytoplasm. Glutathione-dependent oxidoreductase with lower activity compared to the other members of the glutaredoxin family. The disulfide bond functions as an electron carrier in the glutathione-dependent synthesis of deoxyribonucleotides by the enzyme ribonucleotide reductase. This is Glutaredoxin-8 (GRX8) from Saccharomyces cerevisiae (strain ATCC 204508 / S288c) (Baker's yeast).